Consider the following 519-residue polypeptide: Acetylcholine receptor subunit beta-like 2 (519 aa).

Positions 1–18 are cleaved as a signal peptide; sequence MWHWSLLCVFLLVPLANS. Residues 19–244 lie on the Extracellular side of the membrane; it reads TAPISFEANP…ITFKLTMRRK (226 aa). Residue N50 is glycosylated (N-linked (GlcNAc...) asparagine). C154 and C168 are oxidised to a cystine. A run of 3 helical transmembrane segments spans residues 245–269, 277–295, and 311–332; these read TLFY…VFYL, VTLC…LLLA, and YLLF…VLNI. Residues 333–462 lie on the Cytoplasmic side of the membrane; that stretch reads HFRSPSTHNM…WKFVSMVLDR (130 aa). A helical membrane pass occupies residues 463-481; sequence FFLWLFTLSCVFGTLAIIC.

This sequence belongs to the ligand-gated ion channel (TC 1.A.9) family. Acetylcholine receptor (TC 1.A.9.1) subfamily. As to expression, CNS in embryos.

The protein localises to the postsynaptic cell membrane. It localises to the cell membrane. After binding acetylcholine, the AChR responds by an extensive change in conformation that affects all subunits and leads to opening of an ion-conducting channel across the plasma membrane. This chain is Acetylcholine receptor subunit beta-like 2 (nAChRbeta2), found in Drosophila melanogaster (Fruit fly).